The primary structure comprises 248 residues: Transmembrane protein 223 (248 aa).

The next 3 helical transmembrane spans lie at 46 to 68, 84 to 104, and 140 to 160; these read IFRPLVFPVRVASAFTFTSAAVA, LLAIFCGGQFLFWAYLGHFAF, and YGFTSGCLIIGGGILALALLF.

It belongs to the TMEM223 family.

It is found in the mitochondrion inner membrane. In terms of biological role, mitochondrial ribosome-associated protein involved in the first steps of cytochrome c oxidase complex (complex IV) biogenesis. Stimulates the translation of MT-CO1 mRNA and is a constituent of early MT-CO1 assembly intermediates. The protein is Transmembrane protein 223 of Danio rerio (Zebrafish).